A 371-amino-acid chain; its full sequence is 3-isopropylmalate dehydrogenase B (371 aa).

Residue 79-93 (GSKVDHIRRGLDGPE) participates in NAD(+) binding. Substrate contacts are provided by R100, R110, R142, and D229. Mg(2+) is bound by residues D229, D254, and D258. 296–308 (GSAPTIAGKNIAN) lines the NAD(+) pocket.

The protein belongs to the isocitrate and isopropylmalate dehydrogenases family. Homodimer. Mg(2+) is required as a cofactor. Requires Mn(2+) as cofactor.

The protein localises to the cytoplasm. The enzyme catalyses (2R,3S)-3-isopropylmalate + NAD(+) = 4-methyl-2-oxopentanoate + CO2 + NADH. The protein operates within amino-acid biosynthesis; L-leucine biosynthesis; L-leucine from 3-methyl-2-oxobutanoate: step 3/4. Functionally, catalyzes the oxidation of 3-carboxy-2-hydroxy-4-methylpentanoate (3-isopropylmalate) to 3-carboxy-4-methyl-2-oxopentanoate. The product decarboxylates to 4-methyl-2 oxopentanoate. In Aspergillus niger, this protein is 3-isopropylmalate dehydrogenase B (leu2B).